Reading from the N-terminus, the 80-residue chain is Conotoxin Cl11.2 (80 aa).

The first 19 residues, 1–19 (MKMSVTFLLILMILPLFTG), serve as a signal peptide directing secretion. A propeptide spanning residues 20–41 (EWQSGSRLSALKKRLLEKRLLQ) is cleaved from the precursor. Disulfide bonds link Cys-45–Cys-59, Cys-52–Cys-63, Cys-58–Cys-68, and Cys-62–Cys-74.

This sequence belongs to the conotoxin I1 superfamily. In terms of tissue distribution, expressed by the venom duct.

The protein resides in the secreted. The protein is Conotoxin Cl11.2 of Californiconus californicus (California cone).